The sequence spans 414 residues: 3-oxo-isoapionate-4-phosphate transcarboxylase/hydrolase (414 aa).

Lys-180, Asp-182, and Glu-183 together coordinate Mg(2+). Lys-180 carries the N6-carboxylysine modification.

This sequence belongs to the RuBisCO large chain family. It depends on Mg(2+) as a cofactor.

It carries out the reaction 3-oxoisoapionate 4-phosphate + H2O = (2R)-3-phosphoglycerate + glycolate + H(+). Its pathway is carbohydrate metabolism. Its function is as follows. Involved in catabolism of D-apiose. Catalyzes the conversion of 3-oxo-isoapionate 4-phosphate to 3-phosphoglycerate and glycolate. The sequence is that of 3-oxo-isoapionate-4-phosphate transcarboxylase/hydrolase from Xanthobacter autotrophicus (strain ATCC BAA-1158 / Py2).